A 460-amino-acid polypeptide reads, in one-letter code: GTPase Der (460 aa).

2 EngA-type G domains span residues 9–171 (KTIA…SLNQ) and 199–370 (IQVG…ECFS). GTP-binding positions include 15–22 (GQPNVGKS), 62–66 (DTGGM), 123–126 (NKID), 205–212 (GRVNVGKS), 252–256 (DTAGI), and 316–319 (NKWD). The KH-like domain occupies 371–455 (RRIPTSLLNS…PLILNAKDKK (85 aa)).

This sequence belongs to the TRAFAC class TrmE-Era-EngA-EngB-Septin-like GTPase superfamily. EngA (Der) GTPase family. Associates with the 50S ribosomal subunit.

Its function is as follows. GTPase that plays an essential role in the late steps of ribosome biogenesis. The chain is GTPase Der from Helicobacter pylori (strain G27).